The primary structure comprises 120 residues: Large-conductance mechanosensitive channel (120 aa).

2 consecutive transmembrane segments (helical) span residues 7-27 (EFAL…GAAF) and 64-84 (GLFI…FIFV).

The protein belongs to the MscL family. Homopentamer.

It localises to the cell membrane. Functionally, channel that opens in response to stretch forces in the membrane lipid bilayer. May participate in the regulation of osmotic pressure changes within the cell. The sequence is that of Large-conductance mechanosensitive channel from Staphylococcus aureus (strain Mu3 / ATCC 700698).